A 403-amino-acid polypeptide reads, in one-letter code: Putative gustatory receptor 98b (403 aa).

The Cytoplasmic segment spans residues 1 to 11 (MVAQKSRLLAR). A helical transmembrane segment spans residues 12–32 (AFPYLDIFSVFALTPPPQSFG). The Extracellular portion of the chain corresponds to 33-48 (HTPHRRLRWYLMTGYV). Residues 49 to 69 (FYATAILATVFIVSYFNIIAI) traverse the membrane as a helical segment. The Cytoplasmic portion of the chain corresponds to 70–83 (DEEVLEYNVSDFTR). The chain crosses the membrane as a helical span at residues 84 to 104 (VMGNIQKSLYSIMAIANHLNM). The Extracellular segment spans residues 105–144 (LINYRRLGGIYKDIADLEMDMDEASQCFGGQRQRFSFRFR). Residues 145-165 (MALCVGVWMILMVGSMPRLTM) form a helical membrane-spanning segment. At 166 to 191 (TAMGPFVSTLLKILTEFVMIMQQLKS) the chain is on the cytoplasmic side. A helical transmembrane segment spans residues 192–212 (LEYCVFVLIIYELVLRLRRTL). The Extracellular portion of the chain corresponds to 213–259 (SQLQEEFQDCEQQDMLQALCVALKRNQLLLGRIWRLEGDVGSYFTPT). The helical transmembrane segment at 260-280 (MLLLFLYNGLTILHMVNWAYI) threads the bilayer. At 281–365 (NKFLYDSCCQ…LRFTCGGLFD (85 aa)) the chain is on the cytoplasmic side. Residues 366 to 386 (INLKYFGGLLVTIFGYIIILI) traverse the membrane as a helical segment. The Extracellular segment spans residues 387–403 (QFKVQAIAANRYKKVVN).

It belongs to the insect chemoreceptor superfamily. Gustatory receptor (GR) family. Gr2a subfamily.

The protein resides in the cell membrane. Probable gustatory receptor which mediates acceptance or avoidance behavior, depending on its substrates. This Drosophila melanogaster (Fruit fly) protein is Putative gustatory receptor 98b (Gr98b).